Here is a 462-residue protein sequence, read N- to C-terminus: U2 small nuclear ribonucleoprotein auxiliary factor 35 kDa subunit-related protein 2 (462 aa).

The segment covering 1–13 has biased composition (low complexity); that stretch reads METAGATADATAG. Disordered regions lie at residues 1 to 22, 44 to 66, and 115 to 138; these read META…RKKY, AELA…EEER, and WEEQ…EREE. A Glycyl lysine isopeptide (Lys-Gly) (interchain with G-Cter in SUMO2) cross-link involves residue Lys-49. Residues 57–66 are compositionally biased toward basic and acidic residues; sequence AEEKRLEEER. The segment at 170 to 198 adopts a C3H1-type 1 zinc-finger fold; the sequence is EKDRANCPFYSKTGACRFGDRCSRKHNFP. The region spanning 202 to 308 is the RRM domain; sequence PTLLIKGMFT…RQLQCEFCPV (107 aa). A C3H1-type 2 zinc finger spans residues 310 to 337; it reads RWKMAICGLFEVQQCPRGKHCNFLHVFR. Position 353 is a phosphoserine (Ser-353). The tract at residues 354–462 is disordered; it reads PDWTSSSFGK…QPQPQPQSDP (109 aa). Positions 364–379 are enriched in basic and acidic residues; the sequence is NSERRERASHYDEYYG. Ser-389 bears the Phosphoserine mark. Residues 392 to 403 are compositionally biased toward basic and acidic residues; sequence FYKRNGESDRKS. Residues 404–417 show a composition bias toward basic residues; that stretch reads SSRHRVKKSHRYGM.

Component of the U11/U12 snRNPs that are part of the U12-type spliceosome. Interacts (via RS domain) with SRSF1 and SRSF2. Interacts with U2AF2/U2AF65. Post-translationally, phosphorylated in the RS domain by SRPK1.

The protein resides in the nucleus. In terms of biological role, pre-mRNA-binding protein required for splicing of both U2- and U12-type introns. Selectively interacts with the 3'-splice site of U2- and U12-type pre-mRNAs and promotes different steps in U2 and U12 intron splicing. Recruited to U12 pre-mRNAs in an ATP-dependent manner and is required for assembly of the prespliceosome, a precursor to other spliceosomal complexes. For U2-type introns, it is selectively and specifically required for the second step of splicing. In Mus musculus (Mouse), this protein is U2 small nuclear ribonucleoprotein auxiliary factor 35 kDa subunit-related protein 2 (Zrsr2).